The chain runs to 206 residues: Small ribosomal subunit protein uS4 (206 aa).

In terms of domain architecture, S4 RNA-binding spans 96–156 (TRLDNVVYRM…EKSRTQARIK (61 aa)).

Belongs to the universal ribosomal protein uS4 family. In terms of assembly, part of the 30S ribosomal subunit. Contacts protein S5. The interaction surface between S4 and S5 is involved in control of translational fidelity.

In terms of biological role, one of the primary rRNA binding proteins, it binds directly to 16S rRNA where it nucleates assembly of the body of the 30S subunit. Its function is as follows. With S5 and S12 plays an important role in translational accuracy. In Shewanella denitrificans (strain OS217 / ATCC BAA-1090 / DSM 15013), this protein is Small ribosomal subunit protein uS4.